The sequence spans 598 residues: Beta-myrcene/(E)-beta-ocimene synthase 2, chloroplastic (598 aa).

Residues 1-30 (MATLCIGSAPIYQNACIHNFRLQRPRRFIS) constitute a chloroplast transit peptide. Residues arginine 307, aspartate 344, aspartate 348, arginine 486, and asparagine 489 each coordinate (2E)-geranyl diphosphate. 2 residues coordinate Mg(2+): aspartate 344 and aspartate 348. The short motif at 344–348 (DDIYD) is the DDXXD motif element. Residues asparagine 489, threonine 493, and glutamate 497 each contribute to the Mg(2+) site.

It belongs to the terpene synthase family. Tpsb subfamily. Requires Mg(2+) as cofactor. Mn(2+) serves as cofactor. As to expression, expressed exclusively in mature flowers, but not in inmmature buds.

It is found in the plastid. It localises to the chloroplast. It carries out the reaction (2E)-geranyl diphosphate = beta-myrcene + diphosphate. Its pathway is secondary metabolite biosynthesis; terpenoid biosynthesis. Its function is as follows. Involved in monoterpene (C10) biosynthesis. The major products are alpha- and beta-pinene, sabinene, beta-myrcene, (E)-beta-ocimene and limonene. In Arabidopsis thaliana (Mouse-ear cress), this protein is Beta-myrcene/(E)-beta-ocimene synthase 2, chloroplastic (TPS24).